A 1825-amino-acid polypeptide reads, in one-letter code: Proteasome activator complex subunit 4B (1825 aa).

6 HEAT repeats span residues 458 to 502 (PEGP…LVDC), 981 to 1020 (NFCC…NHCG), 1162 to 1200 (YPLP…QLKR), 1336 to 1374 (DAFL…GSKH), 1618 to 1656 (PEQI…YNLF), and 1662 to 1700 (EQCV…CNFL). Residues 1632 to 1720 (AGSSSWHARY…EALCKTRLPK (89 aa)) form a bromodomain-like (BRDL) region.

This sequence belongs to the BLM10 family. Homodimer. Interacts with the 20S and 26S proteasomes.

It localises to the cytoplasm. It is found in the cytosol. The protein resides in the nucleus. Its subcellular location is the nucleus speckle. In terms of biological role, associated component of the proteasome that specifically recognizes acetylated histones and promotes ATP- and ubiquitin-independent degradation of core histones during DNA damage response. Recognizes and binds acetylated histones via its bromodomain-like (BRDL) region and activates the proteasome by opening the gated channel for substrate entry. Binds to the core proteasome via its C-terminus, which occupies the same binding sites as the proteasomal ATPases, opening the closed structure of the proteasome via an active gating mechanism. involved in DNA damage response in somatic cells: binds to acetylated histones and promotes degradation of histones. This chain is Proteasome activator complex subunit 4B (psme4b), found in Danio rerio (Zebrafish).